A 295-amino-acid chain; its full sequence is GTPase Era (295 aa).

The Era-type G domain maps to 7–176 (KTISVCIIGR…IKSKAKVSPW (170 aa)). Residues 15 to 22 (GRPNSGKS) are G1. 15 to 22 (GRPNSGKS) is a binding site for GTP. A G2 region spans residues 41 to 45 (QTTRS). Residues 62–65 (DTPG) form a G3 region. GTP-binding positions include 62–66 (DTPGI) and 124–127 (NKID). Residues 124–127 (NKID) form a G4 region. The interval 152–154 (ISA) is G5. Residues 204–281 (LQQELPYKLT…HLFLFVKVHA (78 aa)) enclose the KH type-2 domain.

It belongs to the TRAFAC class TrmE-Era-EngA-EngB-Septin-like GTPase superfamily. Era GTPase family. As to quaternary structure, monomer.

The protein localises to the cytoplasm. It localises to the cell inner membrane. An essential GTPase that binds both GDP and GTP, with rapid nucleotide exchange. Plays a role in 16S rRNA processing and 30S ribosomal subunit biogenesis and possibly also in cell cycle regulation and energy metabolism. The chain is GTPase Era from Rickettsia typhi (strain ATCC VR-144 / Wilmington).